The following is a 397-amino-acid chain: Pectate lyase (397 aa).

An N-terminal signal peptide occupies residues 1-25; the sequence is MDVYRIRISVFFLLVLLTFAALTTA. N134 is a glycosylation site (N-linked (GlcNAc...) asparagine). Residues D191, D216, and D220 each coordinate Ca(2+). A glycan (N-linked (GlcNAc...) asparagine) is linked at N227. R272 is a catalytic residue.

It belongs to the polysaccharide lyase 1 family. Ca(2+) serves as cofactor.

It catalyses the reaction Eliminative cleavage of (1-&gt;4)-alpha-D-galacturonan to give oligosaccharides with 4-deoxy-alpha-D-galact-4-enuronosyl groups at their non-reducing ends.. It participates in glycan metabolism; pectin degradation; 2-dehydro-3-deoxy-D-gluconate from pectin: step 2/5. This Nicotiana tabacum (Common tobacco) protein is Pectate lyase.